The chain runs to 522 residues: 2-isopropylmalate synthase (522 aa).

The Pyruvate carboxyltransferase domain occupies 5-267; it reads VIIFDTTLRD…ETGINAKEIH (263 aa). Aspartate 14, histidine 202, histidine 204, and asparagine 238 together coordinate Mn(2+). The segment at 392–522 is regulatory domain; that stretch reads QLQQLVVQSD…MQKNRELGGV (131 aa).

It belongs to the alpha-IPM synthase/homocitrate synthase family. LeuA type 1 subfamily. In terms of assembly, homodimer. It depends on Mn(2+) as a cofactor.

It is found in the cytoplasm. The enzyme catalyses 3-methyl-2-oxobutanoate + acetyl-CoA + H2O = (2S)-2-isopropylmalate + CoA + H(+). Its pathway is amino-acid biosynthesis; L-leucine biosynthesis; L-leucine from 3-methyl-2-oxobutanoate: step 1/4. Functionally, catalyzes the condensation of the acetyl group of acetyl-CoA with 3-methyl-2-oxobutanoate (2-ketoisovalerate) to form 3-carboxy-3-hydroxy-4-methylpentanoate (2-isopropylmalate). This chain is 2-isopropylmalate synthase, found in Shewanella baltica (strain OS185).